Reading from the N-terminus, the 60-residue chain is Large ribosomal subunit protein eL37 (60 aa).

Positions 19, 22, 34, and 37 each coordinate Zn(2+). The C4-type zinc-finger motif lies at 19 to 37; that stretch reads CRRCGRMSYHKRHKICSSC.

This sequence belongs to the eukaryotic ribosomal protein eL37 family. It depends on Zn(2+) as a cofactor.

Functionally, binds to the 23S rRNA. The protein is Large ribosomal subunit protein eL37 of Methanospirillum hungatei JF-1 (strain ATCC 27890 / DSM 864 / NBRC 100397 / JF-1).